The following is a 388-amino-acid chain: Lipid-A-disaccharide synthase (388 aa).

This sequence belongs to the LpxB family.

The enzyme catalyses a lipid X + a UDP-2-N,3-O-bis[(3R)-3-hydroxyacyl]-alpha-D-glucosamine = a lipid A disaccharide + UDP + H(+). Its pathway is bacterial outer membrane biogenesis; LPS lipid A biosynthesis. Condensation of UDP-2,3-diacylglucosamine and 2,3-diacylglucosamine-1-phosphate to form lipid A disaccharide, a precursor of lipid A, a phosphorylated glycolipid that anchors the lipopolysaccharide to the outer membrane of the cell. The sequence is that of Lipid-A-disaccharide synthase from Burkholderia thailandensis (strain ATCC 700388 / DSM 13276 / CCUG 48851 / CIP 106301 / E264).